We begin with the raw amino-acid sequence, 135 residues long: Large ribosomal subunit protein eL32 (135 aa).

Residues 51 to 77 (GRDNKFRLKMKGKPRPPEPGYRSPRKV) form a disordered region.

Belongs to the eukaryotic ribosomal protein eL32 family.

The sequence is that of Large ribosomal subunit protein eL32 (rpl32e) from Nanoarchaeum equitans (strain Kin4-M).